The primary structure comprises 511 residues: Lysine--tRNA ligase (511 aa).

The Mg(2+) site is built by Glu-403 and Glu-410.

The protein belongs to the class-II aminoacyl-tRNA synthetase family. In terms of assembly, homodimer. Mg(2+) serves as cofactor.

The protein localises to the cytoplasm. It catalyses the reaction tRNA(Lys) + L-lysine + ATP = L-lysyl-tRNA(Lys) + AMP + diphosphate. The sequence is that of Lysine--tRNA ligase from Onion yellows phytoplasma (strain OY-M).